A 286-amino-acid chain; its full sequence is Bifunctional protein FolD (286 aa).

NADP(+) contacts are provided by residues 164–166 (GRS), Ser193, and Ile234.

Belongs to the tetrahydrofolate dehydrogenase/cyclohydrolase family. Homodimer.

The catalysed reaction is (6R)-5,10-methylene-5,6,7,8-tetrahydrofolate + NADP(+) = (6R)-5,10-methenyltetrahydrofolate + NADPH. The enzyme catalyses (6R)-5,10-methenyltetrahydrofolate + H2O = (6R)-10-formyltetrahydrofolate + H(+). It functions in the pathway one-carbon metabolism; tetrahydrofolate interconversion. Catalyzes the oxidation of 5,10-methylenetetrahydrofolate to 5,10-methenyltetrahydrofolate and then the hydrolysis of 5,10-methenyltetrahydrofolate to 10-formyltetrahydrofolate. This is Bifunctional protein FolD from Oleidesulfovibrio alaskensis (strain ATCC BAA-1058 / DSM 17464 / G20) (Desulfovibrio alaskensis).